The following is a 966-amino-acid chain: Phosphoenolpyruvate carboxylase (966 aa).

A Phosphoserine modification is found at Ser-10. Catalysis depends on residues His-171 and Lys-601.

This sequence belongs to the PEPCase type 1 family. In terms of assembly, homotetramer. Mg(2+) serves as cofactor.

It localises to the cytoplasm. It carries out the reaction oxaloacetate + phosphate = phosphoenolpyruvate + hydrogencarbonate. With respect to regulation, by light-reversible phosphorylation. Its function is as follows. Through the carboxylation of phosphoenolpyruvate (PEP) it forms oxaloacetate, a four-carbon dicarboxylic acid source for the tricarboxylic acid cycle. The protein is Phosphoenolpyruvate carboxylase (PEPC) of Medicago sativa (Alfalfa).